The sequence spans 955 residues: Isoleucine--tRNA ligase (955 aa).

Positions 60–70 match the 'HIGH' region motif; it reads PYANGDLHIGH. L-isoleucyl-5'-AMP is bound at residue Glu-563. The 'KMSKS' region signature appears at 604–608; that stretch reads KMSKS. Lys-607 is a binding site for ATP. The Zn(2+) site is built by Cys-926, Cys-929, Cys-946, and Cys-949.

Belongs to the class-I aminoacyl-tRNA synthetase family. IleS type 1 subfamily. Monomer. Zn(2+) is required as a cofactor.

The protein localises to the cytoplasm. The catalysed reaction is tRNA(Ile) + L-isoleucine + ATP = L-isoleucyl-tRNA(Ile) + AMP + diphosphate. Its function is as follows. Catalyzes the attachment of isoleucine to tRNA(Ile). As IleRS can inadvertently accommodate and process structurally similar amino acids such as valine, to avoid such errors it has two additional distinct tRNA(Ile)-dependent editing activities. One activity is designated as 'pretransfer' editing and involves the hydrolysis of activated Val-AMP. The other activity is designated 'posttransfer' editing and involves deacylation of mischarged Val-tRNA(Ile). The sequence is that of Isoleucine--tRNA ligase from Cyanothece sp. (strain PCC 7425 / ATCC 29141).